We begin with the raw amino-acid sequence, 143 residues long: Large ribosomal subunit protein uL11 (143 aa).

It belongs to the universal ribosomal protein uL11 family. Part of the ribosomal stalk of the 50S ribosomal subunit. Interacts with L10 and the large rRNA to form the base of the stalk. L10 forms an elongated spine to which L12 dimers bind in a sequential fashion forming a multimeric L10(L12)X complex. In terms of processing, one or more lysine residues are methylated.

Functionally, forms part of the ribosomal stalk which helps the ribosome interact with GTP-bound translation factors. The polypeptide is Large ribosomal subunit protein uL11 (Pseudomonas fluorescens (strain SBW25)).